The chain runs to 129 residues: Photosystem II reaction center Psb28 protein (129 aa).

Residues 110-129 (GLGYSNNSGNNEGADEASEG) form a disordered region.

This sequence belongs to the Psb28 family. In terms of assembly, part of the photosystem II complex.

The protein localises to the cellular thylakoid membrane. This chain is Photosystem II reaction center Psb28 protein, found in Synechococcus sp. (strain WH7803).